Consider the following 159-residue polypeptide: MNKNTQGKPSGKPVRRDGVDPVLRSRARRRAVQAIYAWQISGGNAQSLIAQFAHEQAREIADLAYFEALMHGVLDNRRDIDEALGPYLDRGIEEVDAIERAVLRLAGYELRYRLDVPYRVVINEAIESAKRFGSEHGHTYVNGVLDRAAVELRKVESGH.

The tract at residues 1-20 (MNKNTQGKPSGKPVRRDGVD) is disordered.

The protein belongs to the NusB family.

Functionally, involved in transcription antitermination. Required for transcription of ribosomal RNA (rRNA) genes. Binds specifically to the boxA antiterminator sequence of the ribosomal RNA (rrn) operons. This chain is Transcription antitermination protein NusB, found in Stenotrophomonas maltophilia (strain R551-3).